The chain runs to 685 residues: DNA topoisomerase 4 subunit B (685 aa).

Residues Glu-389–Asn-400 are compositionally biased toward basic and acidic residues. The tract at residues Glu-389–Glu-427 is disordered. The 115-residue stretch at Asn-426–Pro-540 folds into the Toprim domain. Glu-432, Asp-505, and Asp-507 together coordinate Mg(2+). Acidic residues-rich tracts occupy residues Gly-644–Thr-654 and Gln-673–Glu-685. Residues Gly-644 to Glu-685 form a disordered region.

This sequence belongs to the type II topoisomerase family. ParE type 1 subfamily. Heterotetramer composed of ParC and ParE. It depends on Mg(2+) as a cofactor. Requires Mn(2+) as cofactor. The cofactor is Ca(2+).

It catalyses the reaction ATP-dependent breakage, passage and rejoining of double-stranded DNA.. Pyrrolopyrimidines inhibit both GyrB and its paralog in topoisomerase IV (parE). Topoisomerase IV is essential for chromosome segregation. It relaxes supercoiled DNA. Performs the decatenation events required during the replication of a circular DNA molecule. In Enterococcus faecalis (strain ATCC 700802 / V583), this protein is DNA topoisomerase 4 subunit B.